We begin with the raw amino-acid sequence, 1114 residues long: MWLKPEEVLLKNALKLWLMERSNEYFVLQRRRGYGEEGGGGLTGLLVGTLDSVLDSTAKVAPFRILHQTPDSQVYLSIACGANREEITKHWDWLEQNIMKTLSVFDSNEDITNFVQGKIRGLIAEEGKQSFAKEDDPEKFREALLKFEKSFGLPEQEKLVTYYSCSYWRGRVPCQGWLYLSTNFLSFYSFLLGSEIKLIISWDAISKLEKTSTVILTESIHVCSQGENHYFSMFLHINETYLLMEQLANYAIKRLFDKETFDNDPVLDDPLQITKRGLEYRAHSEQFKAFFRLPKEETLKEVHECFLWVPFSHFSSHGKMCISENYICFASQDGNLCSVIIPLREVLAIDKTDDSNRSVIISIKGKTAFRFSELKDFEQLVAKLRLKCRAASTQDDVSTEVAVSSDSTGPSENFEEQPLTCPKECSKTVNTEALMTVFHPQNLENLDSKMLKEKMKEQSWNILFSECGRGVSMFRTKKTRDLVVRGIPETLRGELWMLFSGAVNDMATNPGYYAEVVEQSLGTSNLATEEIERDLRRSLPEHPAFQSDTGISALRRVLTAYAYRNPKIGYCQAMNILTSVLLLYAKEEEAFWLLVAVCERMLPDYFNRRIIGALVDQAVFEELIRDHLPQLTDHMTDMTFFSSVSLSWFLTLFISVLPIESAVNVVDCFFYDGIKAILQLGLAILDYNLDKLLTCKDDAEAVTALNRFFDNVINKDSPLPSNVQQGSNISNEKSDHTKVDITDLIKESNEKYGSIRYEDIHSMRCRNRLYVIQTLEETTKQNVLRVVSQDVKMSLQELDELYVIFKKELFISCYWYLSCPGLKHHDPSLPYLEQYQIDCQQFRVLYHLLSPWAHSANRDSLALWTFRLLDENSDCLINFKEFSSAIDIMYNGSFTDKLKLLFKLHIPPAYTEVMSKTSSKGDELSTEELLYFSQLQVSKPADEKETESGRNSPEKGKGKIDIQAYLSQWQDELLKKEETIKDLPRMNQSQFIQFSKTLYNLFHEDPEEESLYQAIAIVTNLLLRMEEVGRKLHSPASSASTARDSGPSEGNAESSVKKDLPSPREEHQWSFAFEQILASLLNEPALVRFFERPLDLKAKLENAKSSQLRSRTKM.

2 consecutive GRAM domains span residues 145-212 (LKFE…EKTS) and 285-353 (EQFK…DKTD). Residues 399 to 411 (TEVAVSSDSTGPS) are compositionally biased toward polar residues. Residues 399–420 (TEVAVSSDSTGPSENFEEQPLT) are disordered. Residues 486–673 (GIPETLRGEL…NVVDCFFYDG (188 aa)) form the Rab-GAP TBC domain. An EF-hand domain is found at 857 to 892 (NRDSLALWTFRLLDENSDCLINFKEFSSAIDIMYNG). 2 disordered regions span residues 938–957 (SKPADEKETESGRNSPEKGK) and 1032–1061 (LHSPASSASTARDSGPSEGNAESSVKKDLP). Over residues 940-957 (PADEKETESGRNSPEKGK) the composition is skewed to basic and acidic residues.

As to quaternary structure, interacts (via domain Rab-GAP TBC) with RAB11B (in GTP-bound form).

Its subcellular location is the cytoplasm. The protein localises to the cytosol. In terms of biological role, involved in vesicular recycling, probably as a RAB11B GTPase-activating protein. This is TBC1 domain family member 8B (Tbc1d8b) from Mus musculus (Mouse).